Consider the following 210-residue polypeptide: Somatotropin (210 aa).

A signal peptide spans 1-22 (MAKALVLLSLVLVSVFVNNGTA). Zn(2+) is bound at residue His38. Cysteines 71 and 183 form a disulfide. Glu192 is a Zn(2+) binding site. Cysteines 200 and 208 form a disulfide.

The protein belongs to the somatotropin/prolactin family.

Its subcellular location is the secreted. Growth hormone plays an important role in growth control and is involved in the regulation of several anabolic processes. Implicated as an osmoregulatory substance important for seawater adaptation. In Misgurnus mizolepis (Chinese weatherloach), this protein is Somatotropin (gh).